Here is a 260-residue protein sequence, read N- to C-terminus: NifU-like protein C1709.19c (260 aa).

Residues 161 to 231 (IKELIETSIR…IPEVENVVQV (71 aa)) form a nifU region.

Belongs to the NifU family.

In Schizosaccharomyces pombe (strain 972 / ATCC 24843) (Fission yeast), this protein is NifU-like protein C1709.19c.